The sequence spans 62 residues: UPF0434 protein RHE_CH03977 (62 aa).

The protein belongs to the UPF0434 family.

This is UPF0434 protein RHE_CH03977 from Rhizobium etli (strain ATCC 51251 / DSM 11541 / JCM 21823 / NBRC 15573 / CFN 42).